Here is a 350-residue protein sequence, read N- to C-terminus: MATHYLSPSILCIILTTLVSIAGAKIPAIIVFGDSSVDSGNNNFISTMARANFEPYGRDFPGGRATGRFCNGRLSSDFTSEAYGLKPTVPAYLDPSYNISDFATGVCFASAGTGYDNSTADVLGVIPLWKEVEYFKEYQSNLSAYLGHRRAAKIIRESLYIVSIGTNDFLENYYTLPDRRSQFSISQYQDFLVEIAEVFLKDIYRLGARKMSFTGISPMGCLPLERVTNLDDPFSCARSYNDLAVDFNGRLRRLVTKLNRELTGIKIYFANPYDIMWDIVTKPNLYGLEISSSACCGTGLFEMGFLCGQDNPLTCSDANKFVFWDAFHPTERTNQIVSDHFFKHLKNLFH.

Residues 1-24 form the signal peptide; that stretch reads MATHYLSPSILCIILTTLVSIAGA. Ser35 functions as the Nucleophile in the catalytic mechanism. N-linked (GlcNAc...) asparagine glycans are attached at residues Asn98, Asn117, and Asn141. Catalysis depends on residues Asp325 and His328.

It belongs to the 'GDSL' lipolytic enzyme family.

The protein resides in the secreted. The sequence is that of GDSL esterase/lipase At2g42990 from Arabidopsis thaliana (Mouse-ear cress).